We begin with the raw amino-acid sequence, 643 residues long: Leukocyte immunoglobulin-like receptor subfamily B member 5 (643 aa).

An N-terminal signal peptide occupies residues 1–23 (MTLTLSVLICLGLNVGPRTCVQA). Topologically, residues 24–458 (GTLPKPTLWA…PQSGLGRHLG (435 aa)) are extracellular. Ig-like C2-type domains lie at 27 to 116 (PKPT…LELV), 111 to 228 (DPLE…SLLI), 224 to 313 (PSLL…DPLD), and 337 to 418 (GENV…LVVS). The cysteines at positions 49 and 98 are disulfide-linked. N-linked (GlcNAc...) asparagine glycosylation is present at Asn-139. Intrachain disulfides connect Cys-144-Cys-195 and Cys-244-Cys-295. 2 N-linked (GlcNAc...) asparagine glycosylation sites follow: Asn-279 and Asn-339. Cys-344 and Cys-395 form a disulfide bridge. The span at 417–433 (VSGPSGDPSLSPTGSTP) shows a compositional bias: low complexity. The interval 417–449 (VSGPSGDPSLSPTGSTPTPGPEDQPLTPTGLDP) is disordered. A helical transmembrane segment spans residues 459-479 (VVTGVSVAFVLLLFLLLFLLL). The Cytoplasmic portion of the chain corresponds to 480 to 643 (RHRHQSKHRT…PSIYAPLAIH (164 aa)). Residues 493–643 (FYRPAGAAGP…PSIYAPLAIH (151 aa)) form a disordered region. Residue Ser-514 is modified to Phosphoserine. 3 stretches are compositionally biased toward basic and acidic residues: residues 531–549 (TQPK…RDED), 557–567 (EVKHSRPRREM), and 579–592 (LDTK…DRQM). An ITIM motif 1 motif is present at residues 605–610 (VTYAQL). Residues 615–631 (LRREATEPPPSQEREPP) show a composition bias toward basic and acidic residues. The ITIM motif 2 signature appears at 635 to 640 (SIYAPL).

Its subcellular location is the membrane. In terms of biological role, may act as receptor for class I MHC antigens. This Pan troglodytes (Chimpanzee) protein is Leukocyte immunoglobulin-like receptor subfamily B member 5 (LILRB5).